We begin with the raw amino-acid sequence, 153 residues long: Aminoglycoside N(6')-acetyltransferase type 1 (153 aa).

The region spanning 6–153 (PTIRQATPAD…YFRMPLEPSA (148 aa)) is the N-acetyltransferase domain. Substrate contacts are provided by W27, Y70, E83, D119, and E140.

Homodimer.

It carries out the reaction kanamycin B + acetyl-CoA = N(6')-acetylkanamycin B + CoA + H(+). Catalyzes the transfer of an acetyl group from acetyl-CoA to the 6'-amino group of aminoglycoside molecules conferring resistance to antibiotics containing the purpurosamine ring including amikacin, gentamicin, kanamycin B, tobramycin, netilmicin, and isepamicin. This chain is Aminoglycoside N(6')-acetyltransferase type 1, found in Stenotrophomonas maltophilia (Pseudomonas maltophilia).